The primary structure comprises 671 residues: Spartin (671 aa).

Met-1 is modified (N-acetylmethionine). In terms of domain architecture, MIT spans 16–94; sequence IKEAYEKAFM…LQNVRTRLEI (79 aa). Positions 110–175 are disordered; sequence VPKLYPEFPP…CPAEAPPAYS (66 aa). Positions 118–128 are enriched in basic and acidic residues; it reads PPKDACKKSPE. Position 126 is a phosphoserine (Ser-126). Low complexity predominate over residues 143–158; that stretch reads GSASAACAGPSGAPSA. Pro residues predominate over residues 159 to 174; the sequence is LPVPSPSCPAEAPPAY. Positions 190-385 are ubiquitin-binding region (UBR) domain; sequence DSGEFSSVGE…SIDQGSKDAR (196 aa). Residues 193–200 carry the LC3-interacting region (LIR); mediates interaction with MAP1LC3A AND MAP1LC3C motif; the sequence is EFSSVGED. A disordered region spans residues 346 to 421; the sequence is FQIPGRSSHP…SSEEKSKELP (76 aa). Lys-360 is covalently cross-linked (Glycyl lysine isopeptide (Lys-Gly) (interchain with G-Cter in ubiquitin)). Residues 369–379 are compositionally biased toward low complexity; that stretch reads QSSSSGSSIDQ. Residues 384–393 are compositionally biased toward basic residues; sequence ARHKGKRGKK. Residues 431–615 enclose the Senescence domain; that stretch reads ILSGASWVSW…YNIDNIGIKA (185 aa). The segment at 435-507 is required for localization to lipid droplets; that stretch reads ASWVSWGLVK…LVDGVCTVAN (73 aa). Ser-474 is subject to Phosphoserine. The disordered stretch occupies residues 635–671; sequence VERPQRESQGGATSTEGRRDIGKQVEEEKPGAGKKDK. Basic and acidic residues predominate over residues 650–671; it reads EGRRDIGKQVEEEKPGAGKKDK.

In terms of assembly, interacts with ITCH and WWP1. Interacts (via MIT domain) with IST1; leading to the recruitment of SPART to midbodies. Interacts with MAP1LC3A and MAP1LC3C. Post-translationally, ubiquitinated; ubiquitination does not require ITCH and WWP1. In terms of tissue distribution, brain (at protein level).

Its subcellular location is the cytoplasm. It localises to the midbody. It is found in the lipid droplet. Functionally, lipophagy receptor that plays an important role in lipid droplet (LD) turnover in motor neurons. Localizes to LDs and interacts with components of the autophagy machinery, such as MAP1LC3A/C proteins to deliver LDs to autophagosomes for degradation via lipophagy. Lipid transfer protein required for lipid droplet degradation, including by lipophagy. Can bind and transfer all lipid species found in lipid droplets, from phospholipids to triglycerides and sterol esters but the direction of lipid transfer by spartin and its cargos are unknown. May be implicated in endosomal trafficking, or microtubule dynamics, or both. Participates in cytokinesis. The chain is Spartin from Mus musculus (Mouse).